The following is a 318-amino-acid chain: NADH-ubiquinone oxidoreductase chain 1 (318 aa).

8 helical membrane-spanning segments follow: residues 2-22 (PVIN…FLML), 69-89 (ILYI…WTPL), 100-120 (LGLL…LWSG), 146-166 (LALI…STLI), 171-191 (HSWL…STLA), 222-242 (LFFM…AMIF), 253-273 (ELHT…FLWI), and 294-314 (LPLT…TSGI).

This sequence belongs to the complex I subunit 1 family. As to quaternary structure, core subunit of respiratory chain NADH dehydrogenase (Complex I) which is composed of 45 different subunits.

The protein resides in the mitochondrion inner membrane. It carries out the reaction a ubiquinone + NADH + 5 H(+)(in) = a ubiquinol + NAD(+) + 4 H(+)(out). Its function is as follows. Core subunit of the mitochondrial membrane respiratory chain NADH dehydrogenase (Complex I) which catalyzes electron transfer from NADH through the respiratory chain, using ubiquinone as an electron acceptor. Essential for the catalytic activity and assembly of complex I. In Pongo pygmaeus (Bornean orangutan), this protein is NADH-ubiquinone oxidoreductase chain 1 (MT-ND1).